Reading from the N-terminus, the 371-residue chain is S-adenosylmethionine:tRNA ribosyltransferase-isomerase (371 aa).

Belongs to the QueA family. In terms of assembly, monomer.

The protein resides in the cytoplasm. It catalyses the reaction 7-aminomethyl-7-carbaguanosine(34) in tRNA + S-adenosyl-L-methionine = epoxyqueuosine(34) in tRNA + adenine + L-methionine + 2 H(+). The protein operates within tRNA modification; tRNA-queuosine biosynthesis. Functionally, transfers and isomerizes the ribose moiety from AdoMet to the 7-aminomethyl group of 7-deazaguanine (preQ1-tRNA) to give epoxyqueuosine (oQ-tRNA). This chain is S-adenosylmethionine:tRNA ribosyltransferase-isomerase, found in Nitratidesulfovibrio vulgaris (strain DP4) (Desulfovibrio vulgaris).